A 32-amino-acid polypeptide reads, in one-letter code: Photosystem I reaction center subunit XII (32 aa).

Residues S3–A23 traverse the membrane as a helical segment.

It belongs to the PsaM family.

The protein localises to the plastid. It localises to the chloroplast thylakoid membrane. This Anthoceros angustus (Hornwort) protein is Photosystem I reaction center subunit XII.